Reading from the N-terminus, the 159-residue chain is Cyclic pyranopterin monophosphate synthase (159 aa).

Substrate is bound by residues 76–78 (LCH) and 114–115 (ME). The active site involves Asp129.

Belongs to the MoaC family. In terms of assembly, homohexamer; trimer of dimers.

It catalyses the reaction (8S)-3',8-cyclo-7,8-dihydroguanosine 5'-triphosphate = cyclic pyranopterin phosphate + diphosphate. Its pathway is cofactor biosynthesis; molybdopterin biosynthesis. Catalyzes the conversion of (8S)-3',8-cyclo-7,8-dihydroguanosine 5'-triphosphate to cyclic pyranopterin monophosphate (cPMP). The polypeptide is Cyclic pyranopterin monophosphate synthase (Psychromonas ingrahamii (strain DSM 17664 / CCUG 51855 / 37)).